A 139-amino-acid polypeptide reads, in one-letter code: D-ribose pyranase (139 aa).

Residue His-20 is the Proton donor of the active site. Substrate-binding positions include Asp-28, His-106, and Tyr-128–Asn-130.

It belongs to the RbsD / FucU family. RbsD subfamily. In terms of assembly, homodecamer.

It localises to the cytoplasm. It catalyses the reaction beta-D-ribopyranose = beta-D-ribofuranose. It participates in carbohydrate metabolism; D-ribose degradation; D-ribose 5-phosphate from beta-D-ribopyranose: step 1/2. Functionally, catalyzes the interconversion of beta-pyran and beta-furan forms of D-ribose. The chain is D-ribose pyranase from Glaesserella parasuis serovar 5 (strain SH0165) (Haemophilus parasuis).